The sequence spans 69 residues: DNA gyrase inhibitor YacG (69 aa).

Zn(2+) is bound by residues Cys13, Cys16, Cys32, and Cys36.

The protein belongs to the DNA gyrase inhibitor YacG family. As to quaternary structure, interacts with GyrB. Zn(2+) serves as cofactor.

In terms of biological role, inhibits all the catalytic activities of DNA gyrase by preventing its interaction with DNA. Acts by binding directly to the C-terminal domain of GyrB, which probably disrupts DNA binding by the gyrase. The sequence is that of DNA gyrase inhibitor YacG from Neisseria meningitidis serogroup C / serotype 2a (strain ATCC 700532 / DSM 15464 / FAM18).